Consider the following 517-residue polypeptide: Acetylcholine receptor subunit delta (517 aa).

The N-terminal stretch at 1–21 is a signal peptide; sequence MEGPVLTLGLLAALAVCGSWG. The Extracellular segment spans residues 22-245; that stretch reads LNEEERLIRH…ITFYLIIRRK (224 aa). Residues asparagine 97 and asparagine 164 are each glycosylated (N-linked (GlcNAc...) asparagine). A disulfide bridge connects residues cysteine 151 and cysteine 165. The next 3 membrane-spanning stretches (helical) occupy residues 246 to 270, 278 to 299, and 312 to 333; these read PLFY…VFYL, TSVA…SKRL, and FLLF…VLNI. The Cytoplasmic segment spans residues 334 to 471; that stretch reads HFRTPSTHVL…WNRVARTVDR (138 aa). Residue tyrosine 390 is modified to Phosphotyrosine; by Tyr-kinases. The helical transmembrane segment at 472–490 threads the bilayer; sequence LCLFVVTPVMVVGTAWIFL.

Belongs to the ligand-gated ion channel (TC 1.A.9) family. Acetylcholine receptor (TC 1.A.9.1) subfamily. Delta/CHRND sub-subfamily. As to quaternary structure, pentamer of two alpha chains, and one each of the beta, delta, and gamma (in immature muscle) or epsilon (in mature muscle) chains. The muscle heteropentamer composed of alpha-1, beta-1, delta, epsilon subunits interacts with the alpha-conotoxin ImII.

It is found in the postsynaptic cell membrane. It localises to the cell membrane. It catalyses the reaction K(+)(in) = K(+)(out). The enzyme catalyses Na(+)(in) = Na(+)(out). In terms of biological role, after binding acetylcholine, the AChR responds by an extensive change in conformation that affects all subunits and leads to opening of an ion-conducting channel across the plasma membrane. This is Acetylcholine receptor subunit delta from Homo sapiens (Human).